A 122-amino-acid polypeptide reads, in one-letter code: MKTLSTQRLLRGMLPVAMLMLMGAWQAPALAASCTQGSTCVTVDGSNSGAMSTEAARQSKQQFNDTKSLRNKVNTRVEKEFDKVDKAIDSEERCDDSLNVNAYWEPNTRKCLDRQTGRQINP.

The signal sequence occupies residues M1 to A31. The disordered stretch occupies residues S46–N71.

It belongs to the UPF0482 family.

The chain is UPF0482 protein Spro_2288 from Serratia proteamaculans (strain 568).